The chain runs to 196 residues: Early light-induced protein, chloroplastic (196 aa).

The N-terminal 48 residues, 1 to 48 (MAVSSCQSIMSNSMTNISSRSRVNQFTNIPSVYIPTLRRNVSLKVRSM), are a transit peptide targeting the chloroplast. Basic and acidic residues predominate over residues 47–57 (SMAEGEPKEQS). Residues 47-81 (SMAEGEPKEQSKVAVDPTTPTASTPTPQPAYTRPP) form a disordered region. 3 consecutive transmembrane segments (helical) span residues 105–125 (LAMIGFVAAMGVEIAKGQGLS), 132–152 (GVAWFLGTSVLLSLASLIPFF), and 176–196 (IAMLGLVALAFTEFVKGTSLV).

Belongs to the ELIP/psbS family.

The protein resides in the plastid. The protein localises to the chloroplast membrane. Probably involved in the integration of pigments into the mature pigment-protein complexes. This chain is Early light-induced protein, chloroplastic, found in Pisum sativum (Garden pea).